The chain runs to 384 residues: G protein-coupled receptor 88 (384 aa).

Topologically, residues 1-35 are extracellular; sequence MTNSSSTSTSTTTGGSLLLLCEEEESWAGRRIPVS. Asn3 carries N-linked (GlcNAc...) asparagine glycosylation. The helical transmembrane segment at 36–56 threads the bilayer; it reads LLYSGLAIGGTLANGMVIYLV. Residues 57 to 73 are Cytoplasmic-facing; the sequence is SSFRKLQTTSNAFIVNG. The chain crosses the membrane as a helical span at residues 74–94; the sequence is CAADLSVCALWMPQEAVLGLL. Residues 95-116 are Extracellular-facing; sequence PSGSAEPPGDWDGGGGSYRLLR. Residues 117 to 136 traverse the membrane as a helical segment; it reads GGLLGLGLTVSLLSHCLVAL. Residues 137-158 are Cytoplasmic-facing; sequence NRYLLITRAPATYQVLYQRRHT. Residues 159–179 traverse the membrane as a helical segment; sequence VGMLALSWALALGLVLLLPPW. Topologically, residues 180 to 195 are extracellular; the sequence is APKPGAEPPQVHYPAL. The chain crosses the membrane as a helical span at residues 196 to 216; sequence LAAGALLAQTALLLHCYLGIV. The Cytoplasmic segment spans residues 217–285; that stretch reads RRVRVSVKRV…RAQRRLSGLS (69 aa). A helical membrane pass occupies residues 286–306; sequence VLLLCCVFLLATQPLVWVSLA. Residues 307–310 are Extracellular-facing; sequence SGFS. The helical transmembrane segment at 311-331 threads the bilayer; sequence LPVPWGVQAASWLLCCALSAL. Over 332-384 the chain is Cytoplasmic; it reads NPLLYTWRNEEFRRSVRSVLPGVGDAAAAAAAATAVPAMSQAQLGTRAAGQHW.

Belongs to the G-protein coupled receptor 1 family. In terms of tissue distribution, expressed predominantly in the striatum.

The protein localises to the cell membrane. It localises to the cell projection. It is found in the cilium membrane. The protein resides in the cytoplasm. Its subcellular location is the nucleus. In terms of biological role, orphan G protein-coupled receptor implicated in a large repertoire of behavioral responses that engage motor activities, spatial learning, and emotional processing. May play a role in the regulation of cognitive and motor function. Couples with the heterotrimeric G protein complex of the G(i) subfamily, consisting of GNAI1, GNB1 and GNG2, thereby acting through a G(i)-mediated pathway. Plays a role in the attenuation of D1 dopamine receptor (D1R)-mediated cAMP response in ciliated cells. In on-ciliated cells, involved in the inhibition of the beta-2 adrenergic receptor (B2AR) response. This chain is G protein-coupled receptor 88 (Gpr88), found in Mus musculus (Mouse).